The primary structure comprises 150 residues: MCSAGGIRRPIQIEEFKTAISGMSDMELAQIKTEIENSINHLQRSNARLGKYIAKLEGADDRLEADDSDDLENIDSGDLALYKDSVRENEIVLNNYNERVDALEQETVYRKTGHGKSKHEVEAKDNTNKGPDVDMDNSNVDVVTPNSIFI.

Phosphoserine is present on residues serine 24 and serine 68. The segment at 110–139 (RKTGHGKSKHEVEAKDNTNKGPDVDMDNSN) is disordered. Positions 118–127 (KHEVEAKDNT) are enriched in basic and acidic residues.

As to quaternary structure, interacts with RPT6. Interacts with the 40S and 60S ribosomal subunits.

The protein localises to the cytoplasm. The protein resides in the nucleus. Its function is as follows. ATPase-dedicated chaperone that assists the formation of the RPT6-RPT3 ATPase pair, an early step in proteasome assembly. Plays a key role in maintaining homeostatic proteasome levels and adjusting proteasome assembly when demands increase, such as during proteasome stresses. Function overlaps with RPN14. This Saccharomyces cerevisiae (strain ATCC 204508 / S288c) (Baker's yeast) protein is Translation machinery-associated protein 17 (TMA17).